The sequence spans 360 residues: Probable dual-specificity RNA methyltransferase RlmN (360 aa).

The active-site Proton acceptor is the E91. The Radical SAM core domain maps to 97-335 (QHYGQSVCVT…CVVRQEHGTD (239 aa)). C104 and C340 form a disulfide bridge. [4Fe-4S] cluster-binding residues include C111, C115, and C118. S-adenosyl-L-methionine is bound by residues 163-164 (GE), S195, 218-220 (SLH), and N296. The active-site S-methylcysteine intermediate is the C340.

It belongs to the radical SAM superfamily. RlmN family. Requires [4Fe-4S] cluster as cofactor.

The protein localises to the cytoplasm. It carries out the reaction adenosine(2503) in 23S rRNA + 2 reduced [2Fe-2S]-[ferredoxin] + 2 S-adenosyl-L-methionine = 2-methyladenosine(2503) in 23S rRNA + 5'-deoxyadenosine + L-methionine + 2 oxidized [2Fe-2S]-[ferredoxin] + S-adenosyl-L-homocysteine. The catalysed reaction is adenosine(37) in tRNA + 2 reduced [2Fe-2S]-[ferredoxin] + 2 S-adenosyl-L-methionine = 2-methyladenosine(37) in tRNA + 5'-deoxyadenosine + L-methionine + 2 oxidized [2Fe-2S]-[ferredoxin] + S-adenosyl-L-homocysteine. Functionally, specifically methylates position 2 of adenine 2503 in 23S rRNA and position 2 of adenine 37 in tRNAs. This is Probable dual-specificity RNA methyltransferase RlmN from Streptococcus equi subsp. zooepidemicus (strain MGCS10565).